Reading from the N-terminus, the 143-residue chain is Nucleoside diphosphate kinase (143 aa).

ATP-binding residues include Lys11, Phe59, Arg87, Thr93, Arg104, and Asn114. The active-site Pros-phosphohistidine intermediate is His117.

The protein belongs to the NDK family. In terms of assembly, homotetramer. It depends on Mg(2+) as a cofactor.

The protein resides in the cytoplasm. The enzyme catalyses a 2'-deoxyribonucleoside 5'-diphosphate + ATP = a 2'-deoxyribonucleoside 5'-triphosphate + ADP. It catalyses the reaction a ribonucleoside 5'-diphosphate + ATP = a ribonucleoside 5'-triphosphate + ADP. Functionally, major role in the synthesis of nucleoside triphosphates other than ATP. The ATP gamma phosphate is transferred to the NDP beta phosphate via a ping-pong mechanism, using a phosphorylated active-site intermediate. In Tolumonas auensis (strain DSM 9187 / NBRC 110442 / TA 4), this protein is Nucleoside diphosphate kinase.